The primary structure comprises 316 residues: HPr kinase/phosphorylase (316 aa).

Residues His143 and Lys164 contribute to the active site. Residue 158 to 165 (GEAGSGKS) participates in ATP binding. Ser165 contributes to the Mg(2+) binding site. Asp182 serves as the catalytic Proton acceptor; for phosphorylation activity. Proton donor; for dephosphorylation activity. Residues 206-215 (LEVRGLGVLN) are important for the catalytic mechanism of both phosphorylation and dephosphorylation. Glu207 contacts Mg(2+). Residue Arg251 is part of the active site. The important for the catalytic mechanism of dephosphorylation stretch occupies residues 272 to 277 (PVMPGR).

This sequence belongs to the HPrK/P family. As to quaternary structure, homohexamer. Requires Mg(2+) as cofactor.

The catalysed reaction is [HPr protein]-L-serine + ATP = [HPr protein]-O-phospho-L-serine + ADP + H(+). It catalyses the reaction [HPr protein]-O-phospho-L-serine + phosphate + H(+) = [HPr protein]-L-serine + diphosphate. Catalyzes the ATP- as well as the pyrophosphate-dependent phosphorylation of a specific serine residue in HPr, a phosphocarrier protein of the phosphoenolpyruvate-dependent sugar phosphotransferase system (PTS). HprK/P also catalyzes the pyrophosphate-producing, inorganic phosphate-dependent dephosphorylation (phosphorolysis) of seryl-phosphorylated HPr (P-Ser-HPr). The polypeptide is HPr kinase/phosphorylase (Xanthomonas axonopodis pv. citri (strain 306)).